A 212-amino-acid polypeptide reads, in one-letter code: Phosphatidylserine decarboxylase proenzyme (212 aa).

S182 functions as the Schiff-base intermediate with substrate; via pyruvic acid in the catalytic mechanism. Position 182 is a pyruvic acid (Ser); by autocatalysis (S182).

This sequence belongs to the phosphatidylserine decarboxylase family. PSD-A subfamily. Heterodimer of a large membrane-associated beta subunit and a small pyruvoyl-containing alpha subunit. Requires pyruvate as cofactor. In terms of processing, is synthesized initially as an inactive proenzyme. Formation of the active enzyme involves a self-maturation process in which the active site pyruvoyl group is generated from an internal serine residue via an autocatalytic post-translational modification. Two non-identical subunits are generated from the proenzyme in this reaction, and the pyruvate is formed at the N-terminus of the alpha chain, which is derived from the carboxyl end of the proenzyme. The post-translation cleavage follows an unusual pathway, termed non-hydrolytic serinolysis, in which the side chain hydroxyl group of the serine supplies its oxygen atom to form the C-terminus of the beta chain, while the remainder of the serine residue undergoes an oxidative deamination to produce ammonia and the pyruvoyl prosthetic group on the alpha chain.

It localises to the cell membrane. It carries out the reaction a 1,2-diacyl-sn-glycero-3-phospho-L-serine + H(+) = a 1,2-diacyl-sn-glycero-3-phosphoethanolamine + CO2. It functions in the pathway phospholipid metabolism; phosphatidylethanolamine biosynthesis; phosphatidylethanolamine from CDP-diacylglycerol: step 2/2. Catalyzes the formation of phosphatidylethanolamine (PtdEtn) from phosphatidylserine (PtdSer). This is Phosphatidylserine decarboxylase proenzyme from Chlorobium luteolum (strain DSM 273 / BCRC 81028 / 2530) (Pelodictyon luteolum).